We begin with the raw amino-acid sequence, 159 residues long: Ribosomal RNA large subunit methyltransferase H (159 aa).

S-adenosyl-L-methionine contacts are provided by residues G108 and 127-132 (FSKMTF).

Belongs to the RNA methyltransferase RlmH family. In terms of assembly, homodimer.

It is found in the cytoplasm. It catalyses the reaction pseudouridine(1915) in 23S rRNA + S-adenosyl-L-methionine = N(3)-methylpseudouridine(1915) in 23S rRNA + S-adenosyl-L-homocysteine + H(+). Functionally, specifically methylates the pseudouridine at position 1915 (m3Psi1915) in 23S rRNA. The polypeptide is Ribosomal RNA large subunit methyltransferase H (Clostridium acetobutylicum (strain ATCC 824 / DSM 792 / JCM 1419 / IAM 19013 / LMG 5710 / NBRC 13948 / NRRL B-527 / VKM B-1787 / 2291 / W)).